The primary structure comprises 465 residues: Lactaldehyde dehydrogenase (465 aa).

220-225 (GSVEVG) is an NAD(+) binding site. Catalysis depends on residues E240 and C274.

This sequence belongs to the aldehyde dehydrogenase family. Homotetramer.

It carries out the reaction (S)-lactaldehyde + NAD(+) + H2O = (S)-lactate + NADH + 2 H(+). Its pathway is cofactor biosynthesis; coenzyme F420 biosynthesis. In terms of biological role, involved in F420 biosynthesis through the oxidation of lactaldehyde to lactate. This chain is Lactaldehyde dehydrogenase, found in Methanococcus aeolicus (strain ATCC BAA-1280 / DSM 17508 / OCM 812 / Nankai-3).